The following is a 239-amino-acid chain: 2,3,4,5-tetrahydropyridine-2,6-dicarboxylate N-acetyltransferase (239 aa).

The protein belongs to the transferase hexapeptide repeat family. DapH subfamily.

The catalysed reaction is (S)-2,3,4,5-tetrahydrodipicolinate + acetyl-CoA + H2O = L-2-acetamido-6-oxoheptanedioate + CoA. The protein operates within amino-acid biosynthesis; L-lysine biosynthesis via DAP pathway; LL-2,6-diaminopimelate from (S)-tetrahydrodipicolinate (acetylase route): step 1/3. Functionally, catalyzes the transfer of an acetyl group from acetyl-CoA to tetrahydrodipicolinate. This Staphylococcus aureus (strain bovine RF122 / ET3-1) protein is 2,3,4,5-tetrahydropyridine-2,6-dicarboxylate N-acetyltransferase.